The sequence spans 414 residues: Alanine--glyoxylate aminotransferase (414 aa).

The transit peptide at 1-23 (MFRALARASATLGPQVAGWARTM) directs the protein to the mitochondrion. Lys-231 is subject to N6-(pyridoxal phosphate)lysine. At Lys-247 the chain carries N6-acetyllysine; alternate. Residue Lys-247 is modified to N6-succinyllysine; alternate. N6-acetyllysine is present on residues Lys-256 and Lys-334. Arg-382 lines the substrate pocket. The short motif at 412-414 (NKL) is the Microbody targeting signal element.

This sequence belongs to the class-V pyridoxal-phosphate-dependent aminotransferase family. Homodimer. The cofactor is pyridoxal 5'-phosphate.

It localises to the peroxisome. Its subcellular location is the mitochondrion matrix. The catalysed reaction is L-serine + pyruvate = 3-hydroxypyruvate + L-alanine. The enzyme catalyses glyoxylate + L-alanine = glycine + pyruvate. Catalyzes the transamination of glyoxylate to glycine and contributes to the glyoxylate detoxification. In terms of biological role, catalyzes the transamination between L-serine and pyruvate and contributes to gluconeogenesis from the L-serine metabolism. This chain is Alanine--glyoxylate aminotransferase, found in Felis catus (Cat).